The primary structure comprises 433 residues: MVRLNSAAGSRWWAPAMAILAVALSVEAAEVARYDNYRLYRVTPHSEAQLRSVAAMEQASDSLIFLETARKLGDRFDIVVAPHKLADFTETLESDYIPHELIEQNVQRAFDEERVRLTNKRAKGPFDWNDYHTLEEIHAWLDQLASEHPKEVELLDAGRSHQNRTMKGVKLSYGPGRPGVFLEGGIHAREWISPATVTYILNQLLTSEDAKVRALAEKFDWYVFPNANPDGYAYTFQVNRLWRKTRKAYGPFCYGADPNRNWDFHWAEQGTSNNACSDTYHGSEAFSEVETRSLAAFVEKLRGKLGAYIAFHSYSQLLLFPYGHTGEHSPNHQDLNEIAEATVKSLAKRYGTQYKYGNVYDAIYPASGSSVDWSYGAQDVKIAYTYELRPDGDAWNGFVLPPNEIVPTGEETLDSLITLLEESSARGYYDEKH.

Residues 1-28 (MVRLNSAAGSRWWAPAMAILAVALSVEA) form the signal peptide. The Peptidase M14 domain occupies 130-423 (DYHTLEEIHA…DSLITLLEES (294 aa)). The Zn(2+) site is built by histidine 187 and glutamate 190. Cysteine 253 and cysteine 276 are joined by a disulfide. Residue histidine 312 coordinates Zn(2+). Residue glutamate 387 is the Proton donor/acceptor of the active site.

It belongs to the peptidase M14 family. Zn(2+) is required as a cofactor. In terms of tissue distribution, expressed in the posterior midgut in pupae and female adults.

The protein localises to the secreted. Its function is as follows. Involved in the digestion of the blood meal. In Anopheles gambiae (African malaria mosquito), this protein is Zinc carboxypeptidase A 1.